The following is a 502-amino-acid chain: NAD(P)H-quinone oxidoreductase subunit 2, chloroplastic (502 aa).

A run of 14 helical transmembrane segments spans residues 15-35 (VLPE…DLIF), 42-62 (VLPY…LFQW), 79-99 (LSIA…LLSI), 108-128 (TLSE…LLCG), 132-152 (ILMI…LTGY), 167-187 (LLIG…LYGL), 210-230 (LASL…IAAA), 253-275 (VSSK…PYII), 278-298 (WHNI…IIAI), 307-327 (LGYS…AGNI), 334-354 (LVYM…VILF), 375-395 (ILAL…PFGG), 413-433 (LLVF…IKII), and 468-488 (ILIC…IISI).

The protein belongs to the complex I subunit 2 family. In terms of assembly, NDH is composed of at least 16 different subunits, 5 of which are encoded in the nucleus.

It localises to the plastid. The protein resides in the chloroplast thylakoid membrane. It catalyses the reaction a plastoquinone + NADH + (n+1) H(+)(in) = a plastoquinol + NAD(+) + n H(+)(out). The enzyme catalyses a plastoquinone + NADPH + (n+1) H(+)(in) = a plastoquinol + NADP(+) + n H(+)(out). Its function is as follows. NDH shuttles electrons from NAD(P)H:plastoquinone, via FMN and iron-sulfur (Fe-S) centers, to quinones in the photosynthetic chain and possibly in a chloroplast respiratory chain. The immediate electron acceptor for the enzyme in this species is believed to be plastoquinone. Couples the redox reaction to proton translocation, and thus conserves the redox energy in a proton gradient. The polypeptide is NAD(P)H-quinone oxidoreductase subunit 2, chloroplastic (Mesostigma viride (Green alga)).